A 284-amino-acid chain; its full sequence is Tropomyosin (284 aa).

A coiled-coil region spans residues 1 to 284 (MDAIKKKMQA…DMTFTELIGN (284 aa)).

Belongs to the tropomyosin family. As to quaternary structure, homodimer.

Tropomyosin, in association with the troponin complex, plays a central role in the calcium dependent regulation of muscle contraction. This is Tropomyosin from Blattella germanica (German cockroach).